We begin with the raw amino-acid sequence, 1164 residues long: WASH complex subunit 5 (1164 aa).

The protein belongs to the strumpellin family. As to quaternary structure, probable component of the WASH complex.

The protein is WASH complex subunit 5 of Dictyostelium discoideum (Social amoeba).